A 346-amino-acid chain; its full sequence is Ribulose-5-phosphate reductase (346 aa).

4 residues coordinate Zn(2+): Cys-45, His-71, Glu-72, and Glu-151.

It belongs to the zinc-containing alcohol dehydrogenase family. Requires Zn(2+) as cofactor.

The enzyme catalyses D-ribitol 5-phosphate + NADP(+) = D-ribulose 5-phosphate + NADPH + H(+). It functions in the pathway cell wall biogenesis; poly(ribitol phosphate) teichoic acid biosynthesis. Catalyzes the NADPH dependent reduction of D-ribulose 5-phosphate to D-ribitol 5-phosphate. The chain is Ribulose-5-phosphate reductase from Streptococcus pneumoniae (strain ATCC BAA-255 / R6).